The primary structure comprises 277 residues: Bifunctional protein FolD (277 aa).

NADP(+) is bound by residues 164-166, Ser-189, and Thr-230; that span reads GRS.

This sequence belongs to the tetrahydrofolate dehydrogenase/cyclohydrolase family. Homodimer.

It carries out the reaction (6R)-5,10-methylene-5,6,7,8-tetrahydrofolate + NADP(+) = (6R)-5,10-methenyltetrahydrofolate + NADPH. The enzyme catalyses (6R)-5,10-methenyltetrahydrofolate + H2O = (6R)-10-formyltetrahydrofolate + H(+). It participates in one-carbon metabolism; tetrahydrofolate interconversion. In terms of biological role, catalyzes the oxidation of 5,10-methylenetetrahydrofolate to 5,10-methenyltetrahydrofolate and then the hydrolysis of 5,10-methenyltetrahydrofolate to 10-formyltetrahydrofolate. In Clostridium perfringens (strain SM101 / Type A), this protein is Bifunctional protein FolD.